Here is a 667-residue protein sequence, read N- to C-terminus: DNA ligase (667 aa).

Residues Asp-32–Asp-36, Ser-81–Leu-82, and Glu-110 contribute to the NAD(+) site. The active-site N6-AMP-lysine intermediate is Lys-112. NAD(+) contacts are provided by Arg-133, Glu-167, Lys-283, and Lys-307. Zn(2+)-binding residues include Cys-401, Cys-404, Cys-419, and Cys-424. A BRCT domain is found at Glu-586–Ser-667.

The protein belongs to the NAD-dependent DNA ligase family. LigA subfamily. Mg(2+) is required as a cofactor. Mn(2+) serves as cofactor.

The enzyme catalyses NAD(+) + (deoxyribonucleotide)n-3'-hydroxyl + 5'-phospho-(deoxyribonucleotide)m = (deoxyribonucleotide)n+m + AMP + beta-nicotinamide D-nucleotide.. Its function is as follows. DNA ligase that catalyzes the formation of phosphodiester linkages between 5'-phosphoryl and 3'-hydroxyl groups in double-stranded DNA using NAD as a coenzyme and as the energy source for the reaction. It is essential for DNA replication and repair of damaged DNA. The sequence is that of DNA ligase from Staphylococcus aureus (strain Mu3 / ATCC 700698).